Consider the following 59-residue polypeptide: Large ribosomal subunit protein uL30 (59 aa).

It belongs to the universal ribosomal protein uL30 family. Part of the 50S ribosomal subunit.

This Sodalis glossinidius (strain morsitans) protein is Large ribosomal subunit protein uL30.